The sequence spans 432 residues: uncharacterized protein (432 aa).

The segment covering 1–18 (MAIGDKRKKNRKNKQNKK) has biased composition (basic residues). Disordered stretches follow at residues 1 to 23 (MAIG…KNDN), 37 to 56 (NSNS…NGNG), and 122 to 168 (STNS…GSSL). Low complexity-rich tracts occupy residues 37–53 (NSNS…NNKN), 122–147 (STNS…QQQQ), and 154–168 (ESQS…GSSL). Residues 181–226 (LNDQLKIVQLEQKIVNLEKEIQRMRNEQNQIHKQNLNQYHELLKQI) are a coiled coil. Disordered regions lie at residues 270 to 290 (VQPV…KSNG) and 310 to 432 (SSKF…STLR). The segment covering 274-288 (STPSSSSNSLASKKS) has biased composition (low complexity). Residues 311 to 324 (SKFAQSNSSPSRVN) show a composition bias toward polar residues. Low complexity predominate over residues 352–378 (KKSATTTTTSSSSNNATTTTAKGSTST). Positions 383-414 (ITNSNNIKNSVLSPKSITKPNTPSNIIFSPLS) are enriched in polar residues.

This is an uncharacterized protein from Dictyostelium discoideum (Social amoeba).